Here is a 253-residue protein sequence, read N- to C-terminus: Prepilin leader peptidase/N-methyltransferase (253 aa).

Residues 4 to 24 traverse the membrane as a helical segment; that stretch reads VYLILFSIVSLILGSFSNVVI. Residues Cys48, Cys51, Cys73, and Cys76 each contribute to the Zn(2+) site. A run of 6 helical transmembrane segments spans residues 80-100, 106-126, 129-149, 159-179, 198-218, and 230-250; these read ISLS…PIYW, VDSF…VIDF, MLLP…YVQQ, IIGG…VRLF, TLIG…IAFI, and CLYI…FFSI.

Belongs to the peptidase A24 family. It depends on Zn(2+) as a cofactor.

The protein resides in the cell inner membrane. It catalyses the reaction Typically cleaves a -Gly-|-Phe- bond to release an N-terminal, basic peptide of 5-8 residues from type IV prepilin, and then N-methylates the new N-terminal amino group, the methyl donor being S-adenosyl-L-methionine.. Its function is as follows. Plays an essential role in type IV pili and type II pseudopili formation by proteolytically removing the leader sequence from substrate proteins and subsequently monomethylating the alpha-amino group of the newly exposed N-terminal phenylalanine. The chain is Prepilin leader peptidase/N-methyltransferase (tcpJ) from Vibrio cholerae serotype O1 (strain ATCC 39315 / El Tor Inaba N16961).